We begin with the raw amino-acid sequence, 238 residues long: MKRRLLAAGCAMLLLSGCNAARQQPSPVPPVTQPQAYAEPEDTAANPGSLYSESDSEFLFSDNRARRVGDIVLVKVVETDKAKNKADTTADKTSTNELGVSAFFGQSSASINPINPAGPFSGAVGANPILGTSSTSKHSATGETKRESTVTTTIAARVLRVLPGGLMEVEGARETRVNDETQYIVVSGLVRARDVSSDNSVTSSQMANARIEYYGKGTLADKQKPGWFTRLMDNVWPF.

A signal peptide spans 1 to 17 (MKRRLLAAGCAMLLLSG). Cys-18 carries N-palmitoyl cysteine lipidation. Cys-18 is lipidated: S-diacylglycerol cysteine. Residues 22–50 (RQQPSPVPPVTQPQAYAEPEDTAANPGSL) are disordered.

It belongs to the FlgH family. In terms of assembly, the basal body constitutes a major portion of the flagellar organelle and consists of four rings (L,P,S, and M) mounted on a central rod.

It localises to the cell outer membrane. The protein resides in the bacterial flagellum basal body. In terms of biological role, assembles around the rod to form the L-ring and probably protects the motor/basal body from shearing forces during rotation. The protein is Flagellar L-ring protein of Nitratidesulfovibrio vulgaris (strain DSM 19637 / Miyazaki F) (Desulfovibrio vulgaris).